The primary structure comprises 212 residues: Nascent polypeptide-associated complex subunit alpha-like protein 4 (212 aa).

The segment covering 25-35 has biased composition (basic and acidic residues); sequence QKENDVVVEDV. The disordered stretch occupies residues 25–74; that stretch reads QKENDVVVEDVKDGDEDDDDVDDDDDEIADGAGENEASKQSRSEKKSRKA. The span at 36–53 shows a compositional bias: acidic residues; sequence KDGDEDDDDVDDDDDEIA. The NAC-A/B domain maps to 65–130; it reads SRSEKKSRKA…AKIDDMSSQL (66 aa). One can recognise a UBA domain in the interval 173 to 210; sequence VEAKDIDLVMTQAGVSRPKAVKALKESNGDIVSAIMEL.

The protein belongs to the NAC-alpha family.

Its function is as follows. May promote appropriate targeting of ribosome-nascent polypeptide complexes. In Arabidopsis thaliana (Mouse-ear cress), this protein is Nascent polypeptide-associated complex subunit alpha-like protein 4.